Reading from the N-terminus, the 838-residue chain is G-protein coupled receptor-associated sorting protein 2 (838 aa).

Disordered regions lie at residues 1 to 121, 218 to 293, and 531 to 552; these read MTGA…PGAR, ASNE…NPFS, and LELSPEGEEQESLLQPDQPSPE. Basic and acidic residues predominate over residues 13-31; the sequence is KPEKKAGEEVVAGPEREND. The segment covering 220-235 has biased composition (polar residues); sequence NESGFWSADETSTASS. Positions 255–271 are enriched in basic residues; the sequence is RSRHRAKHQTNPRSRPR. Phosphoserine is present on residues Ser282 and Ser284. Residues 542–552 are compositionally biased toward polar residues; the sequence is SLLQPDQPSPE.

It belongs to the GPRASP family. Interacts with cytoplasmic tails of a variety of G protein-coupled receptors such as muscarinic acetylcholine receptor M1/CHRM1 and calcitonin receptor/CALCR.

In terms of biological role, may play a role in regulation of a variety of G-protein coupled receptors. In Pongo abelii (Sumatran orangutan), this protein is G-protein coupled receptor-associated sorting protein 2 (GPRASP2).